A 349-amino-acid polypeptide reads, in one-letter code: tRNA N6-adenosine threonylcarbamoyltransferase (349 aa).

Positions 117, 121, and 138 each coordinate Fe cation. Substrate-binding positions include 138-142, aspartate 170, aspartate 191, and asparagine 271; that span reads YVAGG. Aspartate 299 serves as a coordination point for Fe cation.

This sequence belongs to the KAE1 / TsaD family. Fe(2+) serves as cofactor.

Its subcellular location is the cytoplasm. The catalysed reaction is L-threonylcarbamoyladenylate + adenosine(37) in tRNA = N(6)-L-threonylcarbamoyladenosine(37) in tRNA + AMP + H(+). Its function is as follows. Required for the formation of a threonylcarbamoyl group on adenosine at position 37 (t(6)A37) in tRNAs that read codons beginning with adenine. Is probably involved in the transfer of the threonylcarbamoyl moiety of threonylcarbamoyl-AMP (TC-AMP) to the N6 group of A37. The sequence is that of tRNA N6-adenosine threonylcarbamoyltransferase from Aeropyrum pernix (strain ATCC 700893 / DSM 11879 / JCM 9820 / NBRC 100138 / K1).